The following is an 880-amino-acid chain: Alanine--tRNA ligase (880 aa).

4 residues coordinate Zn(2+): His-567, His-571, Cys-669, and His-673.

The protein belongs to the class-II aminoacyl-tRNA synthetase family. Zn(2+) is required as a cofactor.

The protein resides in the cytoplasm. It catalyses the reaction tRNA(Ala) + L-alanine + ATP = L-alanyl-tRNA(Ala) + AMP + diphosphate. In terms of biological role, catalyzes the attachment of alanine to tRNA(Ala) in a two-step reaction: alanine is first activated by ATP to form Ala-AMP and then transferred to the acceptor end of tRNA(Ala). Also edits incorrectly charged Ser-tRNA(Ala) and Gly-tRNA(Ala) via its editing domain. This chain is Alanine--tRNA ligase, found in Bacillus cereus (strain ZK / E33L).